Here is a 414-residue protein sequence, read N- to C-terminus: HERV-H LTR-associating protein 2 (414 aa).

An N-terminal signal peptide occupies residues 1 to 22 (MKAQTALSFFLILITSLSGSQG). The Ig-like V-type 1 domain occupies 61–131 (IHWKYQDSYK…YVGTAIQVIT (71 aa)). N-linked (GlcNAc...) asparagine glycans are attached at residues asparagine 90 and asparagine 103. Residues 138–222 (VGVFLTPVMK…ENSLLKQTWT (85 aa)) form the Ig-like C1-type domain. 2 disulfides stabilise this stretch: cysteine 159-cysteine 210 and cysteine 243-cysteine 317. An Ig-like V-type 2 domain is found at 235 to 328 (QSEHVSLSCQ…ISSDEYTLLT (94 aa)). Residue asparagine 318 is glycosylated (N-linked (GlcNAc...) asparagine). A helical transmembrane segment spans residues 345–365 (KGLWILVPSAILAAFLLIWSV). The interval 383–414 (GAQQERCCVPPGERCPSAPDNGEENVPLSGKV) is disordered.

In terms of assembly, interacts with TMIGD2. In terms of tissue distribution, expressed at high levels in colon, kidney, testis, lung and pancreas, and at lower levels in small intestine, liver and skeletal muscle. In immune cells, highly expressed in B-cells, dendritic cells and macrophages. Not detected in T-cells.

Its subcellular location is the membrane. In terms of biological role, through interaction with TMIGD2, costimulates T-cells in the context of TCR-mediated activation. Enhances T-cell proliferation and cytokine production via an AKT-dependent signaling cascade. This is HERV-H LTR-associating protein 2 (HHLA2) from Homo sapiens (Human).